Reading from the N-terminus, the 797-residue chain is Protocadherin beta-11 (797 aa).

An N-terminal signal peptide occupies residues 1–26; that stretch reads MENGGTRTQQIRQVLLLFVLLGMSQA. At 27 to 690 the chain is on the extracellular side; sequence GSETWSFSVA…AQTDFLTVYL (664 aa). Cadherin domains lie at 35–133, 138–242, 247–347, 352–451, and 456–561; these read VAEE…SPIF, MLLE…SPEF, YEVK…APEI, ITSP…APTF, and YTLF…SPFV. 4 N-linked (GlcNAc...) asparagine glycosylation sites follow: asparagine 418, asparagine 436, asparagine 487, and asparagine 567. Positions 568–671 constitute a Cadherin 6 domain; the sequence is GSAPCTELVP…LVDGFSQPFL (104 aa). The chain crosses the membrane as a helical span at residues 691-711; the sequence is VVALASVSSLFFFSVLLFVAV. Residues 712–797 lie on the Cytoplasmic side of the membrane; it reads RLCRRSRAAS…TFQNSFGFNF (86 aa).

The protein resides in the cell membrane. In terms of biological role, potential calcium-dependent cell-adhesion protein. May be involved in the establishment and maintenance of specific neuronal connections in the brain. This Pan troglodytes (Chimpanzee) protein is Protocadherin beta-11 (PCDHB11).